The chain runs to 625 residues: MTELARKIVAGVGGADNIVSLMHCATRLRFKLKDESKAQAEVLKKTPGIIMVVESGGQFQVVIGNHVADVFLAVNSVAGLDEKAQQAPENDDKGNLLNRFVYVISGIFTPLIGLMAATGILKGMLALALTFQWTTEQSGTYLILFSASDALFWFFPIILGYTAGKRFGGNPFTAMVIGGALVHPLILTAFENGQKADALGLDFLGIPVTLLNYSSSVIPIIFSAWLCSILERRLNAWLPSAIKNFFTPLLCLMVITPVTFLLVGPLSTWISELIAAGYLWLYQAVPAFAGAVMGGFWQIFVMFGLHWGLVPLCINNFTVLGYDTMIPLLMPAIMAQVGAALGVFLCERDAQKKVVAGSAALTSLFGITEPAVYGVNLPRKYPFVIACISGALGATIIGYAQTKVYSFGLPSIFTFMQTIPSTGIDFTVWASVIGGVIAIGCAFVGTVMLHFITAKRQPAQGAPQEKTPEVITPPEQGGICSPMTGEIVPLIHVADTTFASGLLGKGIAILPSVGEVRSPVAGRIASLFATLHAIGIESDDGVEILIHVGIDTVKLDGKFFSAHVNVGDKVNTGDRLISFDIPAIREAGFDLTTPVLISNSDDFTDVLPHGTAQISAGEPLLSIIR.

Positions 1-84 (MTELARKIVA…NSVAGLDEKA (84 aa)) constitute a PTS EIIB type-1 domain. The Periplasmic segment spans residues 1–99 (MTELARKIVA…NDDKGNLLNR (99 aa)). The active-site Phosphocysteine intermediate; for EIIB activity is the Cys24. The chain crosses the membrane as a helical span at residues 100 to 120 (FVYVISGIFTPLIGLMAATGI). The PTS EIIC type-1 domain occupies 102-465 (YVISGIFTPL…RQPAQGAPQE (364 aa)). The Cytoplasmic portion of the chain corresponds to 121-140 (LKGMLALALTFQWTTEQSGT). The helical transmembrane segment at 141–161 (YLILFSASDALFWFFPIILGY) threads the bilayer. Over 162–166 (TAGKR) the chain is Periplasmic. Residues 167–187 (FGGNPFTAMVIGGALVHPLIL) traverse the membrane as a helical segment. The Cytoplasmic portion of the chain corresponds to 188–202 (TAFENGQKADALGLD). A helical membrane pass occupies residues 203-223 (FLGIPVTLLNYSSSVIPIIFS). Residues 224 to 244 (AWLCSILERRLNAWLPSAIKN) are Periplasmic-facing. The chain crosses the membrane as a helical span at residues 245–265 (FFTPLLCLMVITPVTFLLVGP). Topologically, residues 266–284 (LSTWISELIAAGYLWLYQA) are cytoplasmic. Residues 285–305 (VPAFAGAVMGGFWQIFVMFGL) traverse the membrane as a helical segment. The Periplasmic segment spans residues 306–324 (HWGLVPLCINNFTVLGYDT). The helical transmembrane segment at 325-345 (MIPLLMPAIMAQVGAALGVFL) threads the bilayer. Over 346 to 353 (CERDAQKK) the chain is Cytoplasmic. Residues 354–374 (VVAGSAALTSLFGITEPAVYG) form a helical membrane-spanning segment. Over 375–380 (VNLPRK) the chain is Periplasmic. A helical transmembrane segment spans residues 381-401 (YPFVIACISGALGATIIGYAQ). Residues 402–403 (TK) are Cytoplasmic-facing. Residues 404–424 (VYSFGLPSIFTFMQTIPSTGI) traverse the membrane as a helical segment. Over 425–431 (DFTVWAS) the chain is Periplasmic. The helical transmembrane segment at 432–452 (VIGGVIAIGCAFVGTVMLHFI) threads the bilayer. The Cytoplasmic segment spans residues 453–625 (TAKRQPAQGA…AGEPLLSIIR (173 aa)). The region spanning 495-599 (DTTFASGLLG…DLTTPVLISN (105 aa)) is the PTS EIIA type-1 domain. The Tele-phosphohistidine intermediate; for EIIA activity role is filled by His547.

It localises to the cell inner membrane. Functionally, the phosphoenolpyruvate-dependent sugar phosphotransferase system (sugar PTS), a major carbohydrate active -transport system, catalyzes the phosphorylation of incoming sugar substrates concomitantly with their translocation across the cell membrane. This system is involved in beta-glucoside transport. Its function is as follows. Acts both as a kinase and as a phosphatase on BglG. The polypeptide is PTS system beta-glucoside-specific EIIBCA component (bglF) (Escherichia coli (strain K12)).